Reading from the N-terminus, the 331-residue chain is Junctional sarcoplasmic reticulum protein 1 (331 aa).

Disordered regions lie at residues 1–118 and 157–331; these read MSMT…EELP and RVPE…KGRD. The interval 3–76 is mediates interaction with CACNA1S; it reads MTTRAWEELD…EKEPAARGTP (74 aa). Composition is skewed to basic and acidic residues over residues 21-35 and 61-71; these read LEDH…EDRA and TRPKKMEKEPA. Composition is skewed to pro residues over residues 103-112 and 161-175; these read PLQPPPPPPA and PWVP…PSSP. Basic and acidic residues-rich tracts occupy residues 222-242 and 250-302; these read AVRE…PRRE and PRKE…EPRK. The span at 320-331 shows a compositional bias: basic residues; that stretch reads SRQKLRAGKGRD.

As to quaternary structure, interacts with CACNA1S, CACNB1 and calsequestrin.

Its subcellular location is the sarcoplasmic reticulum membrane. The protein localises to the endoplasmic reticulum membrane. Its function is as follows. Involved in skeletal muscle excitation/contraction coupling (EC), probably acting as a regulator of the voltage-sensitive calcium channel CACNA1S. EC is a physiological process whereby an electrical signal (depolarization of the plasma membrane) is converted into a chemical signal, a calcium gradient, by the opening of ryanodine receptor calcium release channels. May regulate CACNA1S membrane targeting and activity. This is Junctional sarcoplasmic reticulum protein 1 (JSRP1) from Homo sapiens (Human).